The following is a 203-amino-acid chain: Thymidylate kinase (203 aa).

7–14 is a binding site for ATP; it reads GGEGAGKT.

It belongs to the thymidylate kinase family.

It catalyses the reaction dTMP + ATP = dTDP + ADP. Its function is as follows. Phosphorylation of dTMP to form dTDP in both de novo and salvage pathways of dTTP synthesis. The protein is Thymidylate kinase (tmk) of Chlamydia trachomatis serovar D (strain ATCC VR-885 / DSM 19411 / UW-3/Cx).